The sequence spans 224 residues: Thiamine-phosphate synthase (224 aa).

4-amino-2-methyl-5-(diphosphooxymethyl)pyrimidine contacts are provided by residues 44–48 (QFREK) and N79. The Mg(2+) site is built by D80 and D99. S117 serves as a coordination point for 4-amino-2-methyl-5-(diphosphooxymethyl)pyrimidine. Position 143–145 (143–145 (TET)) interacts with 2-[(2R,5Z)-2-carboxy-4-methylthiazol-5(2H)-ylidene]ethyl phosphate. 4-amino-2-methyl-5-(diphosphooxymethyl)pyrimidine is bound at residue K146. Residues G175 and 195–196 (IS) each bind 2-[(2R,5Z)-2-carboxy-4-methylthiazol-5(2H)-ylidene]ethyl phosphate.

This sequence belongs to the thiamine-phosphate synthase family. The cofactor is Mg(2+).

It catalyses the reaction 2-[(2R,5Z)-2-carboxy-4-methylthiazol-5(2H)-ylidene]ethyl phosphate + 4-amino-2-methyl-5-(diphosphooxymethyl)pyrimidine + 2 H(+) = thiamine phosphate + CO2 + diphosphate. The catalysed reaction is 2-(2-carboxy-4-methylthiazol-5-yl)ethyl phosphate + 4-amino-2-methyl-5-(diphosphooxymethyl)pyrimidine + 2 H(+) = thiamine phosphate + CO2 + diphosphate. It carries out the reaction 4-methyl-5-(2-phosphooxyethyl)-thiazole + 4-amino-2-methyl-5-(diphosphooxymethyl)pyrimidine + H(+) = thiamine phosphate + diphosphate. The protein operates within cofactor biosynthesis; thiamine diphosphate biosynthesis; thiamine phosphate from 4-amino-2-methyl-5-diphosphomethylpyrimidine and 4-methyl-5-(2-phosphoethyl)-thiazole: step 1/1. Its function is as follows. Condenses 4-methyl-5-(beta-hydroxyethyl)thiazole monophosphate (THZ-P) and 2-methyl-4-amino-5-hydroxymethyl pyrimidine pyrophosphate (HMP-PP) to form thiamine monophosphate (TMP). This chain is Thiamine-phosphate synthase, found in Bacillus licheniformis (strain ATCC 14580 / DSM 13 / JCM 2505 / CCUG 7422 / NBRC 12200 / NCIMB 9375 / NCTC 10341 / NRRL NRS-1264 / Gibson 46).